A 281-amino-acid polypeptide reads, in one-letter code: 2,3,4,5-tetrahydropyridine-2,6-dicarboxylate N-succinyltransferase (281 aa).

Substrate-binding residues include R108 and D145.

The protein belongs to the transferase hexapeptide repeat family. In terms of assembly, homotrimer.

It is found in the cytoplasm. It catalyses the reaction (S)-2,3,4,5-tetrahydrodipicolinate + succinyl-CoA + H2O = (S)-2-succinylamino-6-oxoheptanedioate + CoA. It functions in the pathway amino-acid biosynthesis; L-lysine biosynthesis via DAP pathway; LL-2,6-diaminopimelate from (S)-tetrahydrodipicolinate (succinylase route): step 1/3. This Nitrobacter winogradskyi (strain ATCC 25391 / DSM 10237 / CIP 104748 / NCIMB 11846 / Nb-255) protein is 2,3,4,5-tetrahydropyridine-2,6-dicarboxylate N-succinyltransferase.